A 142-amino-acid polypeptide reads, in one-letter code: Large ribosomal subunit protein uL13 (142 aa).

It belongs to the universal ribosomal protein uL13 family. In terms of assembly, part of the 50S ribosomal subunit.

This protein is one of the early assembly proteins of the 50S ribosomal subunit, although it is not seen to bind rRNA by itself. It is important during the early stages of 50S assembly. In Syntrophus aciditrophicus (strain SB), this protein is Large ribosomal subunit protein uL13.